The primary structure comprises 334 residues: MIDPRLPLTDIHRHLDGNIRAQTILDLGQQFNLNLPANELDTLRPHVQITKTEPDLVSFLQKLDWGVAVLGSLDACRRVAYENVEDAAHAGLHYAELRFSPFYMAMKHQLPITGVVEAVIDGIASGCRDFNIDIRLIGILSRTFGEQACLQELDSLLAHREGITALDLAGDELGFPGSLFRRHFNRARDAGLRITVHAGEAAGPESIWQAIRELGAERIGHGVKAVEDRKLMDYLAEHKIGIESCLTSNIQTSTVVSLATHPLATFLRHGIVASINTDDPAVQGIEIANEYLVAAPAAGLTPHEIRQAQANGLEMAFISEQEKQALRDKVFPIS.

Zn(2+) contacts are provided by His12 and His14. The substrate site is built by His14, Asp16, and Gly170. Residue His197 coordinates Zn(2+). Residue Glu200 is the Proton donor of the active site. Asp278 is a binding site for Zn(2+). Asp279 contacts substrate.

The protein belongs to the metallo-dependent hydrolases superfamily. Adenosine and AMP deaminases family. Adenosine deaminase subfamily. Zn(2+) is required as a cofactor.

The catalysed reaction is adenosine + H2O + H(+) = inosine + NH4(+). It catalyses the reaction 2'-deoxyadenosine + H2O + H(+) = 2'-deoxyinosine + NH4(+). Its function is as follows. Catalyzes the hydrolytic deamination of adenosine and 2-deoxyadenosine. The protein is Adenosine deaminase of Yersinia pseudotuberculosis serotype IB (strain PB1/+).